Consider the following 152-residue polypeptide: Transmembrane protein 35B (152 aa).

A signal peptide spans 1–21; the sequence is MLVSLGALRVLLGIFFTLTGA. 3 helical membrane-spanning segments follow: residues 62–82, 85–105, and 111–131; these read AAVG…PPVL, ISNV…VVLE, and YIPA…QFLV.

Belongs to the DoxX family.

The protein localises to the membrane. The chain is Transmembrane protein 35B from Rattus norvegicus (Rat).